Consider the following 399-residue polypeptide: Glutamyl-tRNA reductase (399 aa).

Residues 45 to 48 (TCNR), serine 93, 98 to 100 (EDQ), and glutamine 104 contribute to the substrate site. The Nucleophile role is filled by cysteine 46. Position 173–178 (173–178 (GAGKMG)) interacts with NADP(+).

This sequence belongs to the glutamyl-tRNA reductase family. As to quaternary structure, homodimer.

The catalysed reaction is (S)-4-amino-5-oxopentanoate + tRNA(Glu) + NADP(+) = L-glutamyl-tRNA(Glu) + NADPH + H(+). It functions in the pathway porphyrin-containing compound metabolism; protoporphyrin-IX biosynthesis; 5-aminolevulinate from L-glutamyl-tRNA(Glu): step 1/2. Functionally, catalyzes the NADPH-dependent reduction of glutamyl-tRNA(Glu) to glutamate 1-semialdehyde (GSA). The protein is Glutamyl-tRNA reductase of Methanobrevibacter smithii (strain ATCC 35061 / DSM 861 / OCM 144 / PS).